A 229-amino-acid polypeptide reads, in one-letter code: Small ribosomal subunit protein uS3 (229 aa).

Residues I38 to K106 enclose the KH type-2 domain. The segment covering P208–K217 has biased composition (acidic residues). The disordered stretch occupies residues P208–E229. Over residues E218–E229 the composition is skewed to basic and acidic residues.

This sequence belongs to the universal ribosomal protein uS3 family. In terms of assembly, part of the 30S ribosomal subunit. Forms a tight complex with proteins S10 and S14.

Binds the lower part of the 30S subunit head. Binds mRNA in the 70S ribosome, positioning it for translation. The polypeptide is Small ribosomal subunit protein uS3 (Natranaerobius thermophilus (strain ATCC BAA-1301 / DSM 18059 / JW/NM-WN-LF)).